The primary structure comprises 348 residues: Phosphoribosylformylglycinamidine cyclo-ligase (348 aa).

It belongs to the AIR synthase family.

The protein resides in the cytoplasm. It carries out the reaction 2-formamido-N(1)-(5-O-phospho-beta-D-ribosyl)acetamidine + ATP = 5-amino-1-(5-phospho-beta-D-ribosyl)imidazole + ADP + phosphate + H(+). It participates in purine metabolism; IMP biosynthesis via de novo pathway; 5-amino-1-(5-phospho-D-ribosyl)imidazole from N(2)-formyl-N(1)-(5-phospho-D-ribosyl)glycinamide: step 2/2. The chain is Phosphoribosylformylglycinamidine cyclo-ligase from Cereibacter sphaeroides (strain ATCC 17025 / ATH 2.4.3) (Rhodobacter sphaeroides).